The following is a 283-amino-acid chain: MLRIAVQSKGRLYDETMMLLEEAGIKLNRGKRILLLSAKGFPVEVLFLRDDDIPQSVANGVADIGIVGENEYVEKGQEAKLIKRLGFSKCRLSLAIPKDEEYKGAEWFEGKTIATSYPAILRSFLEERGVKADIHVISGSVEIAPGIGLADAIFDIVSSGSTLVSNQLREVEVVLPCEALLIANNNLSKEKLEILDELLFRFEAIQVAEGKKYVLLNAPKEKLDEIIEVLPGMKSPTITPLANDEWVSVQSVIAEKHFWEIIGKLKSLGAEGILVLPIEKMIV.

This sequence belongs to the ATP phosphoribosyltransferase family. Long subfamily. It depends on Mg(2+) as a cofactor.

It is found in the cytoplasm. The catalysed reaction is 1-(5-phospho-beta-D-ribosyl)-ATP + diphosphate = 5-phospho-alpha-D-ribose 1-diphosphate + ATP. Its pathway is amino-acid biosynthesis; L-histidine biosynthesis; L-histidine from 5-phospho-alpha-D-ribose 1-diphosphate: step 1/9. Feedback inhibited by histidine. Functionally, catalyzes the condensation of ATP and 5-phosphoribose 1-diphosphate to form N'-(5'-phosphoribosyl)-ATP (PR-ATP). Has a crucial role in the pathway because the rate of histidine biosynthesis seems to be controlled primarily by regulation of HisG enzymatic activity. In Parabacteroides distasonis (strain ATCC 8503 / DSM 20701 / CIP 104284 / JCM 5825 / NCTC 11152), this protein is ATP phosphoribosyltransferase.